The following is a 263-amino-acid chain: Pheophorbidase (263 aa).

One can recognise an AB hydrolase-1 domain in the interval 13–244; it reads HFVFVHGASH…LEESDHSAFF (232 aa). The active-site Acyl-ester intermediate is the Ser88. Residues Asp212 and His240 each act as charge relay system in the active site.

The protein belongs to the AB hydrolase superfamily. In terms of assembly, homodimer.

Its subcellular location is the cytoplasm. The catalysed reaction is pheophorbide a + H2O + H(+) = pyropheophorbide a + methanol + CO2. Inhibited by methanol and phenylmethylsulfonicfluoride (PMSF). Involved in chlorophyll degradation. Specific for the pheophorbides of the dihydroporphyrin and tetrahydroporphyrin types. Chlorophyllide a, pheophytin a and the nonfluorescent chlorophyll catabolite (NCC) are not used as substrates. This Raphanus sativus (Radish) protein is Pheophorbidase (PPD).